The following is a 97-amino-acid chain: DNA replication protein 1 (97 aa).

A coiled-coil region spans residues 49-78 (IELEKKMTKLEHENKLMKNALYELSRMENN).

It belongs to the phi29likevirus DNA replication protein 1 family. Homomultimer. Self-associates into large complexes forming long filamentous structures. Interacts (via N-terminus) with the primer terminal protein.

It localises to the host membrane. Protein that assembles into highly ordered structures and provides a specific site for viral DNA replication. Probably anchors the viral DNA replisome to the host membrane. This Bacillus subtilis (Bacteriophage PZA) protein is DNA replication protein 1 (1C).